Reading from the N-terminus, the 165-residue chain is Protein SprT (165 aa).

Residues 19-163 (REKLAQANLK…RCVKCGEPLV (145 aa)) form the SprT-like domain. Residue histidine 78 coordinates Zn(2+). The active site involves glutamate 79. A Zn(2+)-binding site is contributed by histidine 82.

It belongs to the SprT family. Requires Zn(2+) as cofactor.

Its subcellular location is the cytoplasm. This is Protein SprT from Enterobacter sp. (strain 638).